The chain runs to 65 residues: Large ribosomal subunit protein uL29 (65 aa).

The protein belongs to the universal ribosomal protein uL29 family.

The protein is Large ribosomal subunit protein uL29 of Dehalococcoides mccartyi (strain ATCC BAA-2266 / KCTC 15142 / 195) (Dehalococcoides ethenogenes (strain 195)).